The chain runs to 407 residues: Large ribosomal subunit protein uL4y (407 aa).

A disordered region spans residues 57 to 96 (PYAVSKKAGHQTSAESWGTGRAVSRIPRVPGGGTHRAGQA).

This sequence belongs to the universal ribosomal protein uL4 family.

This Arabidopsis thaliana (Mouse-ear cress) protein is Large ribosomal subunit protein uL4y (RPL4D).